A 252-amino-acid chain; its full sequence is 3-deoxy-manno-octulosonate cytidylyltransferase (252 aa).

It belongs to the KdsB family.

The protein localises to the cytoplasm. It catalyses the reaction 3-deoxy-alpha-D-manno-oct-2-ulosonate + CTP = CMP-3-deoxy-beta-D-manno-octulosonate + diphosphate. It functions in the pathway nucleotide-sugar biosynthesis; CMP-3-deoxy-D-manno-octulosonate biosynthesis; CMP-3-deoxy-D-manno-octulosonate from 3-deoxy-D-manno-octulosonate and CTP: step 1/1. It participates in bacterial outer membrane biogenesis; lipopolysaccharide biosynthesis. In terms of biological role, activates KDO (a required 8-carbon sugar) for incorporation into bacterial lipopolysaccharide in Gram-negative bacteria. This chain is 3-deoxy-manno-octulosonate cytidylyltransferase, found in Solibacter usitatus (strain Ellin6076).